A 344-amino-acid polypeptide reads, in one-letter code: Heat-inducible transcription repressor HrcA (344 aa).

This sequence belongs to the HrcA family.

In terms of biological role, negative regulator of class I heat shock genes (grpE-dnaK-dnaJ and groELS operons). Prevents heat-shock induction of these operons. This Streptococcus uberis (strain ATCC BAA-854 / 0140J) protein is Heat-inducible transcription repressor HrcA.